Here is a 369-residue protein sequence, read N- to C-terminus: Protein disulfide-isomerase erp38 (369 aa).

The N-terminal stretch at 1-18 (MVLLKSLVVASLAAAVAA) is a signal peptide. Thioredoxin domains follow at residues 19–130 (KSAV…EKTG) and 131–251 (VKAR…EKAG). Active-site nucleophile residues include Cys-50, Cys-53, Cys-170, and Cys-173. Intrachain disulfides connect Cys-50-Cys-53 and Cys-170-Cys-173. Residues 366-369 (KEEL) carry the Prevents secretion from ER motif.

Belongs to the protein disulfide isomerase family.

Its subcellular location is the endoplasmic reticulum lumen. The enzyme catalyses Catalyzes the rearrangement of -S-S- bonds in proteins.. This chain is Protein disulfide-isomerase erp38 (erp38), found in Neurospora crassa (strain ATCC 24698 / 74-OR23-1A / CBS 708.71 / DSM 1257 / FGSC 987).